Here is a 173-residue protein sequence, read N- to C-terminus: Copper transport protein ctr5 (173 aa).

The Extracellular portion of the chain corresponds to 1 to 54 (MSLSKMSMSGMSGMGMGSSSNSSAATCRMSMLWNWYIHDSCFLAKSWHINTGNK). A helical transmembrane segment spans residues 55-75 (FAGSIIGIFFFAVAIEGLSLV). Residues 76-135 (QRMFDRWIVAHSNGKTLSGPLRIFFPSSTVHVTVWQQLIRAAMYSSFYLSATILMLIVMS) lie on the Cytoplasmic side of the membrane. The chain crosses the membrane as a helical span at residues 136 to 156 (FNGYAILFGFVGAWIGFFLFA). At 157–173 (SDTYGTPSTGTGCCESR) the chain is on the extracellular side.

Belongs to the copper transporter (Ctr) (TC 1.A.56) family. SLC31A subfamily. As to quaternary structure, interacts with ctr4.

It is found in the membrane. In terms of biological role, required for high affinity copper (probably reduced Cu I) transport into the cell. This is Copper transport protein ctr5 (ctr5) from Schizosaccharomyces pombe (strain 972 / ATCC 24843) (Fission yeast).